A 291-amino-acid chain; its full sequence is MDSPWDELALAFSRTSMFPFFDIAHYLVSVMAVKRQPGAAALAWKNPISSWFTAMLHCFGGGILSCLLLAEPPLKFLANHTNILLASSIWYITFFCPHDLVSQGYSYLPVQLLASGMKEVTRTWKIVGGVTHANSYYKNGWIVMIAIGWARGAGGTIITNFERLVKGDWKPEGDEWLKMSYPAKVTLLGSVIFTFQHTQHLAISKHNLMFLYTIFIVATKITMMTTQTSTMTFAPFEDTLSWMLFGWQQPFSSCEKKSEAKSPSNGVGSLASKPVDVASDNVKKKHTKKNE.

Residues 1 to 19 (MDSPWDELALAFSRTSMFP) lie on the Lumenal side of the membrane. Residues 20-33 (FFDIAHYLVSVMAV) traverse the membrane as a helical segment. The Cytoplasmic segment spans residues 34–50 (KRQPGAAALAWKNPISS). A helical membrane pass occupies residues 51–70 (WFTAMLHCFGGGILSCLLLA). The Lumenal segment spans residues 71–82 (EPPLKFLANHTN). Residues 83-99 (ILLASSIWYITFFCPHD) form a helical membrane-spanning segment. Topologically, residues 100-104 (LVSQG) are cytoplasmic. The chain crosses the membrane as a helical span at residues 105–121 (YSYLPVQLLASGMKEVT). Residues Lys-118 and Arg-122 each contribute to the a 1,2-diacyl-sn-glycero-3-phospho-(1D-myo-inositol-4,5-bisphosphate) site. Over 122–139 (RTWKIVGGVTHANSYYKN) the chain is Lumenal. A helical transmembrane segment spans residues 140 to 156 (GWIVMIAIGWARGAGGT). Residues 157–179 (IITNFERLVKGDWKPEGDEWLKM) are Cytoplasmic-facing. Residues 180-195 (SYPAKVTLLGSVIFTF) form a helical membrane-spanning segment. At 196 to 207 (QHTQHLAISKHN) the chain is on the lumenal side. A helical membrane pass occupies residues 208–227 (LMFLYTIFIVATKITMMTTQ). Topologically, residues 228–291 (TSTMTFAPFE…VKKKHTKKNE (64 aa)) are cytoplasmic. The disordered stretch occupies residues 256–291 (KKSEAKSPSNGVGSLASKPVDVASDNVKKKHTKKNE). Position 262 is a phosphoserine (Ser-262).

The protein belongs to the TMEM38 family. Homotrimer; conformation seems to be controled by binding to diacylglycerol (DAG).

It localises to the endoplasmic reticulum membrane. It carries out the reaction K(+)(in) = K(+)(out). Channel activity is activated by increased cytosolic Ca(2+) levels and blocked by luminal high Ca(2+) levels. Its function is as follows. Intracellular monovalent cation channel required for maintenance of rapid intracellular calcium release. Acts as a potassium counter-ion channel that functions in synchronization with calcium release from intracellular stores. Activated by increased cytosolic Ca(2+) levels. In Homo sapiens (Human), this protein is Trimeric intracellular cation channel type B.